Here is an 88-residue protein sequence, read N- to C-terminus: MLTPEDKAAIVAEYATSEGDTGSPEVQVALLTHRITYLTEHFKSHIHDNHSRTGLLRLVSRRRKLLDYLHKKNAQRYFDLIKKLGLRK.

This sequence belongs to the universal ribosomal protein uS15 family. In terms of assembly, part of the 30S ribosomal subunit. Forms a bridge to the 50S subunit in the 70S ribosome, contacting the 23S rRNA.

Its function is as follows. One of the primary rRNA binding proteins, it binds directly to 16S rRNA where it helps nucleate assembly of the platform of the 30S subunit by binding and bridging several RNA helices of the 16S rRNA. In terms of biological role, forms an intersubunit bridge (bridge B4) with the 23S rRNA of the 50S subunit in the ribosome. The chain is Small ribosomal subunit protein uS15 from Hydrogenovibrio crunogenus (strain DSM 25203 / XCL-2) (Thiomicrospira crunogena).